The primary structure comprises 70 residues: Alpha-conotoxin EIIB (70 aa).

Positions 1–21 are cleaved as a signal peptide; it reads MGMRMMFIVFLLVVLATTVVS. Positions 22-51 are excised as a propeptide; the sequence is FTLDHVLGLASEGRNAKAIDNALDQRDPKR. Residue Gln52 is modified to Pyrrolidone carboxylic acid. Pro54 is subject to Hydroxyproline. 2 disulfides stabilise this stretch: Cys56/Cys62 and Cys57/Cys67. The residue at position 67 (Cys67) is a Cysteine amide.

Expressed by the venom duct.

The protein localises to the secreted. In terms of biological role, alpha-conotoxins bind to the nicotinic acetylcholine receptors (nAChR) and inhibit them. This peptide potently blocks muscular nicotinic acetylcholine receptor (CHRNA1-CHRNB1-CHRNG-CHRND), and has no effect on neuronal receptors. It is able to totally displace [125I]-Bgtx from the Torpedo receptor with an inhibition constant (Ki) of 2.2 and 0.7 nM. This chain is Alpha-conotoxin EIIB, found in Conus ermineus (Agate cone).